Reading from the N-terminus, the 201-residue chain is Large ribosomal subunit protein uL4 (201 aa).

Residues S43–V73 are disordered.

Belongs to the universal ribosomal protein uL4 family. In terms of assembly, part of the 50S ribosomal subunit.

Functionally, one of the primary rRNA binding proteins, this protein initially binds near the 5'-end of the 23S rRNA. It is important during the early stages of 50S assembly. It makes multiple contacts with different domains of the 23S rRNA in the assembled 50S subunit and ribosome. Its function is as follows. Forms part of the polypeptide exit tunnel. This is Large ribosomal subunit protein uL4 from Sodalis glossinidius (strain morsitans).